The sequence spans 300 residues: ETS homologous factor (300 aa).

The 87-residue stretch at 29 to 115 folds into the PNT domain; that stretch reads STCNVSSGFF…SNLQHLKWNG (87 aa). The segment at 179–204 is disordered; the sequence is LPIAESPDTKKEQDHPTKPHTKKHNP. Over residues 185–195 the composition is skewed to basic and acidic residues; that stretch reads PDTKKEQDHPT. The segment at residues 207–289 is a DNA-binding region (ETS); that stretch reads THLWEFIRDI…DGRRLVYKFG (83 aa).

This sequence belongs to the ETS family.

It localises to the nucleus. In terms of biological role, transcriptional activator that may play a role in regulating epithelial cell differentiation and proliferation. May act as a repressor for a specific subset of ETS/AP-1-responsive genes, and as a modulator of the nuclear response to mitogen-activated protein kinase signaling cascades. Binds to DNA sequences containing the consensus nucleotide core sequence GGAA. Involved in regulation of TNFRSF10B/DR5 expression through Ets-binding sequences on the TNFRSF10B/DR5 promoter. This chain is ETS homologous factor (EHF), found in Bos taurus (Bovine).